A 472-amino-acid chain; its full sequence is Argininosuccinate lyase (472 aa).

Belongs to the lyase 1 family. Argininosuccinate lyase subfamily.

It localises to the cytoplasm. The enzyme catalyses 2-(N(omega)-L-arginino)succinate = fumarate + L-arginine. It functions in the pathway amino-acid biosynthesis; L-arginine biosynthesis; L-arginine from L-ornithine and carbamoyl phosphate: step 3/3. This is Argininosuccinate lyase from Polynucleobacter asymbioticus (strain DSM 18221 / CIP 109841 / QLW-P1DMWA-1) (Polynucleobacter necessarius subsp. asymbioticus).